The following is a 380-amino-acid chain: NADPH oxidoreductase (380 aa).

Residues 58–164 (ARELRGRILG…AAPQGNFVLP (107 aa)) enclose the FAD-binding FR-type domain. In terms of domain architecture, 2Fe-2S ferredoxin-type spans 299–380 (GTVTFARSGK…AASGDCVLDI (82 aa)). Cys333, Cys338, Cys341, and Cys368 together coordinate [2Fe-2S] cluster.

As to quaternary structure, interacts with DesA3 to form a functional acyl-CoA desaturase complex. The cofactor is [2Fe-2S] cluster. Requires FAD as cofactor.

Its subcellular location is the cell membrane. It participates in lipid metabolism; fatty acid metabolism. Functionally, is likely involved in the aerobic desaturation system responsible for the synthesis of oleic acid from stearoyl-CoA; oleic acid is a precursor of mycobacterial membrane phospholipids and triglycerides. Is the electron transfer partner for the stearoyl-CoA 9-desaturase DesA3. Catalyzes electron transfer reaction between NADPH and the diiron center of DesA3. Cannot use NADH. In Mycobacterium tuberculosis (strain ATCC 25618 / H37Rv), this protein is NADPH oxidoreductase.